Reading from the N-terminus, the 99-residue chain is RNA-binding protein Hfq (99 aa).

Positions 9 to 68 (DPYLNALRRERIPVSIYLVNGIKLQGQIESFDQFVILLKNTVNQMVYKHAISTVVPARSV) constitute a Sm domain. The segment at 67–99 (SVSHHNNNAQQQYQQQAAQAASAQSNETSSQAE) is disordered. Over residues 72-99 (NNNAQQQYQQQAAQAASAQSNETSSQAE) the composition is skewed to low complexity.

The protein belongs to the Hfq family. As to quaternary structure, homohexamer.

Its function is as follows. RNA chaperone that binds small regulatory RNA (sRNAs) and mRNAs to facilitate mRNA translational regulation in response to envelope stress, environmental stress and changes in metabolite concentrations. Also binds with high specificity to tRNAs. The protein is RNA-binding protein Hfq of Actinobacillus succinogenes (strain ATCC 55618 / DSM 22257 / CCUG 43843 / 130Z).